The primary structure comprises 165 residues: Transcriptional repressor NrdR (165 aa).

Residues cysteine 3 to cysteine 34 fold into a zinc finger. The region spanning leucine 46–aspartate 136 is the ATP-cone domain.

This sequence belongs to the NrdR family. Zn(2+) is required as a cofactor.

Its function is as follows. Negatively regulates transcription of bacterial ribonucleotide reductase nrd genes and operons by binding to NrdR-boxes. The sequence is that of Transcriptional repressor NrdR from Arthrobacter sp. (strain FB24).